Here is a 350-residue protein sequence, read N- to C-terminus: Peptide-N(4)-(N-acetyl-beta-glucosaminyl)asparagine amidase (350 aa).

Positions 123, 126, 157, and 160 each coordinate Zn(2+). Cys183 serves as the catalytic Nucleophile. Catalysis depends on residues His210 and Asp227. Residue Glu230 coordinates substrate. The segment at 324–350 (EIPPAAGAAGRQSGSADWKRQRGEDGR) is disordered. Residues 340–350 (DWKRQRGEDGR) show a composition bias toward basic and acidic residues.

Belongs to the transglutaminase-like superfamily. PNGase family. It depends on Zn(2+) as a cofactor.

It localises to the cytoplasm. It catalyses the reaction Hydrolysis of an N(4)-(acetyl-beta-D-glucosaminyl)asparagine residue in which the glucosamine residue may be further glycosylated, to yield a (substituted) N-acetyl-beta-D-glucosaminylamine and a peptide containing an aspartate residue.. In terms of biological role, specifically deglycosylates the denatured form of N-linked glycoproteins in the cytoplasm and assists their proteasome-mediated degradation. Cleaves the beta-aspartyl-glucosamine (GlcNAc) of the glycan and the amide side chain of Asn, converting Asn to Asp. Prefers proteins containing high-mannose over those bearing complex type oligosaccharides. Can recognize misfolded proteins in the endoplasmic reticulum that are exported to the cytosol to be destroyed and deglycosylate them, while it has no activity toward native proteins. Deglycosylation is a prerequisite for subsequent proteasome-mediated degradation of some, but not all, misfolded glycoproteins. The chain is Peptide-N(4)-(N-acetyl-beta-glucosaminyl)asparagine amidase (PNG1) from Eremothecium gossypii (strain ATCC 10895 / CBS 109.51 / FGSC 9923 / NRRL Y-1056) (Yeast).